The primary structure comprises 229 residues: Urease accessory protein UreF (229 aa).

It belongs to the UreF family. In terms of assembly, ureD, UreF and UreG form a complex that acts as a GTP-hydrolysis-dependent molecular chaperone, activating the urease apoprotein by helping to assemble the nickel containing metallocenter of UreC. The UreE protein probably delivers the nickel.

It localises to the cytoplasm. In terms of biological role, required for maturation of urease via the functional incorporation of the urease nickel metallocenter. The protein is Urease accessory protein UreF of Ralstonia pickettii (strain 12J).